The chain runs to 270 residues: Tryptophan synthase alpha chain (270 aa).

Residues E49 and D60 each act as proton acceptor in the active site.

It belongs to the TrpA family. Tetramer of two alpha and two beta chains.

The enzyme catalyses (1S,2R)-1-C-(indol-3-yl)glycerol 3-phosphate + L-serine = D-glyceraldehyde 3-phosphate + L-tryptophan + H2O. It participates in amino-acid biosynthesis; L-tryptophan biosynthesis; L-tryptophan from chorismate: step 5/5. Functionally, the alpha subunit is responsible for the aldol cleavage of indoleglycerol phosphate to indole and glyceraldehyde 3-phosphate. This chain is Tryptophan synthase alpha chain, found in Marinobacter nauticus (strain ATCC 700491 / DSM 11845 / VT8) (Marinobacter aquaeolei).